A 275-amino-acid polypeptide reads, in one-letter code: Phosphatidylglycerol--prolipoprotein diacylglyceryl transferase (275 aa).

The next 3 helical transmembrane spans lie at 18–38 (IEVH…YFIA), 55–75 (IIFW…VIFQ), and 89–109 (IWHG…TGVI). An a 1,2-diacyl-sn-glycero-3-phospho-(1'-sn-glycerol)-binding site is contributed by arginine 137. 2 helical membrane passes run 203–223 (IGET…FVEG) and 235–255 (IRVA…MIIY).

It belongs to the Lgt family.

It localises to the cell membrane. The enzyme catalyses L-cysteinyl-[prolipoprotein] + a 1,2-diacyl-sn-glycero-3-phospho-(1'-sn-glycerol) = an S-1,2-diacyl-sn-glyceryl-L-cysteinyl-[prolipoprotein] + sn-glycerol 1-phosphate + H(+). The protein operates within protein modification; lipoprotein biosynthesis (diacylglyceryl transfer). In terms of biological role, catalyzes the transfer of the diacylglyceryl group from phosphatidylglycerol to the sulfhydryl group of the N-terminal cysteine of a prolipoprotein, the first step in the formation of mature lipoproteins. In Staphylococcus carnosus (strain TM300), this protein is Phosphatidylglycerol--prolipoprotein diacylglyceryl transferase.